A 416-amino-acid chain; its full sequence is Phosphoglycerate kinase (416 aa).

Residues Val23, Asp24, Phe25, Asn26, Gln39, Arg40, Ser63, His64, Gly66, Arg67, Leu122, Arg123, His170, and Arg171 each coordinate (2R)-3-phosphoglycerate. Residue Gly214 coordinates ADP. Gly214 lines the CDP pocket. AMP contacts are provided by Ala215 and Lys216. Residue Ala215 participates in ATP binding. Mg(2+) is bound at residue Ala215. Asp219 provides a ligand contact to CDP. Mg(2+) is bound at residue Asp219. Lys220 serves as a coordination point for AMP. Residue Lys220 coordinates ATP. Residue Gly238 coordinates ADP. Position 238 (Gly238) interacts with CDP. Positions 239 and 312 each coordinate AMP. ATP contacts are provided by Gly239 and Gly312. Residues Gly337, Ala339, and Phe342 each coordinate CDP. Phe342 is an ADP binding site. Glu343 serves as a coordination point for AMP. Residues Glu343, Asp374, and Thr375 each coordinate ATP. Asp374 contacts Mg(2+).

It belongs to the phosphoglycerate kinase family. In terms of assembly, monomer. Mg(2+) is required as a cofactor.

The protein resides in the cytoplasm. It localises to the mitochondrion. It carries out the reaction (2R)-3-phosphoglycerate + ATP = (2R)-3-phospho-glyceroyl phosphate + ADP. The protein operates within carbohydrate degradation; glycolysis; pyruvate from D-glyceraldehyde 3-phosphate: step 2/5. Its function is as follows. Catalyzes one of the two ATP producing reactions in the glycolytic pathway via the reversible conversion of 1,3-diphosphoglycerate to 3-phosphoglycerate. Both L- and D- forms of purine and pyrimidine nucleotides can be used as substrates, but the activity is much lower on pyrimidines. Negatively regulates the biosynthesis of acetyl-CoA from pyruvate in the mitochondrion. The chain is Phosphoglycerate kinase (pgk1) from Hypocrea jecorina (Trichoderma reesei).